A 291-amino-acid chain; its full sequence is Meteorin (291 aa).

Positions 1 to 21 (MLVAALLCALCCGLLAASARA) are cleaved as a signal peptide. 5 cysteine pairs are disulfide-bonded: C28/C49, C80/C116, C169/C240, C172/C264, and C182/C286.

This sequence belongs to the meteorin family. As to quaternary structure, monomer.

The protein localises to the secreted. Involved in both glial cell differentiation and axonal network formation during neurogenesis. Promotes astrocyte differentiation and transforms cerebellar astrocytes into radial glia. Also induces axonal extension in small and intermediate neurons of sensory ganglia by activating nearby satellite glia. The polypeptide is Meteorin (Metrn) (Rattus norvegicus (Rat)).